A 452-amino-acid polypeptide reads, in one-letter code: Gamma conglutin 1 (452 aa).

The first 33 residues, 1 to 33 (MAKNMAPILHILVISLSYSFLFVTSSSQNSQSL), serve as a signal peptide directing secretion. Positions 61 to 432 (HWGNILKRTP…DLARSRVGFN (372 aa)) constitute a Peptidase A1 domain. Disulfide bonds link cysteine 89–cysteine 179, cysteine 103–cysteine 116, cysteine 108–cysteine 134, cysteine 119–cysteine 129, and cysteine 353–cysteine 394. Asparagine 131 is a glycosylation site (N-linked (GlcNAc...) asparagine).

This sequence belongs to the peptidase A1 family. As to quaternary structure, two-subunit monomeric unit made of alpha and beta subunits coupled by disulfide bonds (at pH 4.5 and under non-reducing conditions). Monomeric alpha and beta subunits in reducing conditions. Can also form oligomers including dimer, tetramer and cyclic hexamer (trimer of dimers) (at pH &gt; 5.5). Component of globulins complexes which accumulate in seeds. Interacts with flavonoids (e.g. apigenin glucosides) present in globulins complexes. Glycosylated on alpha chain at Asn-131; identified N-glycans bound are Man(2)(Xyl)(Fuc)GlcNAc(2), Man(3)(Xyl)(Fuc)GlcNAc(2), GlcNAcMan(3)(Xyl)(Fuc)GlcNAc(2) and GlcNAc(2)Man(3)(Xyl)(Fuc)GlcNAc(2). As to expression, expressed in developing seeds and in the young roots and cotyledons of germinating seeds and young seedlings.

The protein resides in the secreted. The protein localises to the extracellular space. In terms of biological role, sulfur-rich seed storage protein that remains undegraded at germination. The uncleaved form exhibits some inhibitory activity against GH11 xylanase from T.longibrachiatum, more at pH 7 than at pH 5.3, but not against GH12 xyloglucan-specific endoglucanase (XEG) from A.aculeatus. Binds to model phospholipid membranes containing dimyristoyl phosphatidylglycerol (DMPG), dioleoyl phosphatidic acid (DOPA) or mixture of dimyristoyl phosphatidylcholine and dimyristoyl phosphatidylglycerol (DMPC:DMPG), or mixture of dioleoyl phosphatidic acid and dioleoyl phosphatidylcholine (DOPC:DOPA). The polypeptide is Gamma conglutin 1 (Lupinus albus (White lupine)).